We begin with the raw amino-acid sequence, 465 residues long: ATP synthase subunit beta (465 aa).

153–160 contacts ATP; it reads GGAGVGKT.

Belongs to the ATPase alpha/beta chains family. As to quaternary structure, F-type ATPases have 2 components, CF(1) - the catalytic core - and CF(0) - the membrane proton channel. CF(1) has five subunits: alpha(3), beta(3), gamma(1), delta(1), epsilon(1). CF(0) has three main subunits: a(1), b(2) and c(9-12). The alpha and beta chains form an alternating ring which encloses part of the gamma chain. CF(1) is attached to CF(0) by a central stalk formed by the gamma and epsilon chains, while a peripheral stalk is formed by the delta and b chains.

Its subcellular location is the cell membrane. It catalyses the reaction ATP + H2O + 4 H(+)(in) = ADP + phosphate + 5 H(+)(out). Produces ATP from ADP in the presence of a proton gradient across the membrane. The catalytic sites are hosted primarily by the beta subunits. The sequence is that of ATP synthase subunit beta from Clostridium perfringens (strain ATCC 13124 / DSM 756 / JCM 1290 / NCIMB 6125 / NCTC 8237 / Type A).